Reading from the N-terminus, the 98-residue chain is NADH-ubiquinone oxidoreductase chain 4L (98 aa).

3 helical membrane passes run 1-21, 29-49, and 61-81; these read MSMV…GLLM, SLLC…VTIL, and IILL…LVMV.

It belongs to the complex I subunit 4L family. In terms of assembly, core subunit of respiratory chain NADH dehydrogenase (Complex I) which is composed of 45 different subunits.

It is found in the mitochondrion inner membrane. The enzyme catalyses a ubiquinone + NADH + 5 H(+)(in) = a ubiquinol + NAD(+) + 4 H(+)(out). In terms of biological role, core subunit of the mitochondrial membrane respiratory chain NADH dehydrogenase (Complex I) which catalyzes electron transfer from NADH through the respiratory chain, using ubiquinone as an electron acceptor. Part of the enzyme membrane arm which is embedded in the lipid bilayer and involved in proton translocation. This is NADH-ubiquinone oxidoreductase chain 4L (MT-ND4L) from Erignathus barbatus (Bearded seal).